A 589-amino-acid polypeptide reads, in one-letter code: MNEQIKDKLKKIPHKPGCYLWKDKNGIVIYVGKAVDLANRIKQYFLKDRDLKTKKLANEICDVDYVVVNNENESLLLENNLIAKYKPKYNMLLRESNAFPYILVTKEEHPRILYSHDSTKKIKGTYYGPFANSNIKKYELYNFINRIFPLRKCNKLPNKKCIYYDIGQCLGPCIKKVTRQDYEPYLKEINDFFSGKSKSIDEQLEKKEIQAAEKLMFEDSQKYLELRKNLKMFSERQDIIFSQKNDEDIIGFYCKENVISIVIFKYVNGSLLSKYDLITVFYSELDEILLTLIYEYYSKIAIELPKTVYLSLSDEKLKTLSESLKIKFLNPSKGVKKDVMDTAFNNAVEIMKNKYLQLISNQNRELNSLEELQKLLDIKDLYRMEIFDNSNIFNTNKVGAMVVYENGVKNKNEYRKFNIKDEDANSDYDYMKEVIYRRYKNNTASFGEIPNLIIVDGGKPQVKAALESLKFLELDSIIPVIGLAKDDKHKTDRIVKWDFSEIKLDKKSDLYFFLLNIQDEVHRFAISFYRNKKSKSLFENSLYKIKNLGKTRIEKLLEKYETLDKIKEASVEELSQIVPIEVAKEIKKL.

Positions 14 to 91 (HKPGCYLWKD…IAKYKPKYNM (78 aa)) constitute a GIY-YIG domain.

Belongs to the UvrC family. In terms of assembly, interacts with UvrB in an incision complex.

It localises to the cytoplasm. In terms of biological role, the UvrABC repair system catalyzes the recognition and processing of DNA lesions. UvrC both incises the 5' and 3' sides of the lesion. The N-terminal half is responsible for the 3' incision and the C-terminal half is responsible for the 5' incision. The polypeptide is UvrABC system protein C (Malacoplasma penetrans (strain HF-2) (Mycoplasma penetrans)).